The chain runs to 59 residues: Large ribosomal subunit protein uL30 (59 aa).

The protein belongs to the universal ribosomal protein uL30 family. As to quaternary structure, part of the 50S ribosomal subunit.

The chain is Large ribosomal subunit protein uL30 from Aliivibrio salmonicida (strain LFI1238) (Vibrio salmonicida (strain LFI1238)).